A 354-amino-acid polypeptide reads, in one-letter code: Lariat debranching enzyme (354 aa).

3 residues coordinate a divalent metal cation: Cys14, His16, and Asp45. Positions 59, 90, 91, 134, and 156 each coordinate RNA. Position 90 (Asn90) interacts with a divalent metal cation. Residues 130–158 (SGIYKSFDEKKPYTYPPSPNDVVSLFHTR) are lariat recognition loop. His180 lines the a divalent metal cation pocket. RNA is bound by residues Gly201, Asp205, His230, Met231, and His232. His230 contacts a divalent metal cation. His232 provides a ligand contact to a divalent metal cation.

The protein belongs to the lariat debranching enzyme family. Fe(2+) is required as a cofactor. The cofactor is Zn(2+). Requires Mn(2+) as cofactor.

Its subcellular location is the cytoplasm. The protein localises to the perinuclear region. Its activity is regulated as follows. Active in presence of diverse metals including Fe(2+), Zn(2+) and Mn(2+). Binds two metal cations in two adjacent alpha and beta metal-binding pockets. The activity is the highest with Fe(2+) bound to the 2 metal-binding sites. The activity is slightly lower with Fe(2+) bound to the beta site and Zn(2+) to the alpha site and decreases further when only Zn(2+) is bound. No activity with Mn(2+). However, another study showed activity with Mn(2+) bound to the beta site and Zn(2+) to the alpha site. Mn(2+) appears unable to bind to the alpha site. Its function is as follows. Cleaves the 2'-5' phosphodiester linkage at the branch point of excised lariat intron RNA and converts them into linear molecules that can be subsequently degraded, thereby facilitating ribonucleotide turnover. This Entamoeba histolytica (strain ATCC 30459 / HM-1:IMSS / ABRM) protein is Lariat debranching enzyme.